Reading from the N-terminus, the 186-residue chain is MAAENPSVSGVAGRYATALFELARDQKSVDAVKADLDRFKAMLAESPDLTRLVRSPVFSADAQGKALVAVLAKAGIGGIAANFLQLLNANRRLFAVHDVIRAFGALVAKFKGEATADVTVAEPLNDQNLDALKSALKSVTGKDVTLNVNVDPAIIGGLVVKLGSRMVDSSLRTKLNSIKHAMKEAG.

The protein belongs to the ATPase delta chain family. F-type ATPases have 2 components, F(1) - the catalytic core - and F(0) - the membrane proton channel. F(1) has five subunits: alpha(3), beta(3), gamma(1), delta(1), epsilon(1). CF(0) has four main subunits: a(1), b(1), b'(1) and c(10-14). The alpha and beta chains form an alternating ring which encloses part of the gamma chain. F(1) is attached to F(0) by a central stalk formed by the gamma and epsilon chains, while a peripheral stalk is formed by the delta, b and b' chains.

It localises to the cell inner membrane. Functionally, f(1)F(0) ATP synthase produces ATP from ADP in the presence of a proton or sodium gradient. F-type ATPases consist of two structural domains, F(1) containing the extramembraneous catalytic core and F(0) containing the membrane proton channel, linked together by a central stalk and a peripheral stalk. During catalysis, ATP synthesis in the catalytic domain of F(1) is coupled via a rotary mechanism of the central stalk subunits to proton translocation. Its function is as follows. This protein is part of the stalk that links CF(0) to CF(1). It either transmits conformational changes from CF(0) to CF(1) or is implicated in proton conduction. The sequence is that of ATP synthase subunit delta from Rhodopseudomonas palustris (strain BisA53).